Here is a 155-residue protein sequence, read N- to C-terminus: Dau c 1 isoallergen Dau c 1.0401 (155 aa).

This sequence belongs to the BetVI family. As to quaternary structure, monomer. As to expression, expressed in roots (at protein level). Expressed in roots.

In Daucus carota subsp. sativus (Carrot), this protein is Dau c 1 isoallergen Dau c 1.0401.